The chain runs to 814 residues: Telomere repeats-binding bouquet formation protein 1 (814 aa).

2 ARM repeats span residues Glu-93 to Arg-136 and Gly-327 to Thr-368. Disordered regions lie at residues Asp-461 to Arg-521, Ser-551 to Asp-584, and Phe-653 to Asn-753. A coiled-coil region spans residues Glu-488–Glu-512. 3 stretches are compositionally biased toward basic and acidic residues: residues Arg-499–Arg-521, Ile-565–Arg-577, and Glu-679–Lys-688. Basic residues predominate over residues Gln-689–Ser-699. The segment covering Arg-714–Ser-741 has biased composition (basic and acidic residues). A Myb-like domain is found at Gly-746–Gln-799.

It belongs to the TERB1 family. In terms of assembly, component of the MAJIN-TERB1-TERB2 complex.

The protein localises to the chromosome. It localises to the telomere. Its subcellular location is the nucleus inner membrane. In terms of biological role, meiosis-specific telomere-associated protein involved in meiotic telomere attachment to the nucleus inner membrane, a crucial step for homologous pairing and synapsis. Component of the MAJIN-TERB1-TERB2 complex, which promotes telomere cap exchange by mediating attachment of telomeric DNA to the inner nuclear membrane and replacement of the protective cap of telomeric chromosomes: in early meiosis, the MAJIN-TERB1-TERB2 complex associates with telomeric DNA and the shelterin/telosome complex. During prophase, the complex matures and promotes release of the shelterin/telosome complex from telomeric DNA. In the MAJIN-TERB1-TERB2 complex, TERB1 probably mediates association with the shelterin/telosome complex. The protein is Telomere repeats-binding bouquet formation protein 1 (ccdc79) of Danio rerio (Zebrafish).